A 61-amino-acid polypeptide reads, in one-letter code: Large ribosomal subunit protein uL30 (61 aa).

Belongs to the universal ribosomal protein uL30 family. Part of the 50S ribosomal subunit.

This is Large ribosomal subunit protein uL30 from Frankia casuarinae (strain DSM 45818 / CECT 9043 / HFP020203 / CcI3).